Consider the following 103-residue polypeptide: MYAVFQSGGKQHRVAEGHTVRLEKLEVATGETVEFDQVLLVADGETVHVGAPLVEGGKVVAEVVSHGRDEKVTIVKFRRRKHHDKKMGHRQWFTEVKITAINA.

It belongs to the bacterial ribosomal protein bL21 family. As to quaternary structure, part of the 50S ribosomal subunit. Contacts protein L20.

Functionally, this protein binds to 23S rRNA in the presence of protein L20. The polypeptide is Large ribosomal subunit protein bL21 (Shewanella woodyi (strain ATCC 51908 / MS32)).